The chain runs to 631 residues: MBT domain-containing protein 1 (631 aa).

The segment at Met-1–Asn-31 is disordered. Residues Pro-45–Arg-80 form an FCS-type zinc finger. Zn(2+)-binding residues include Cys-54, Cys-57, Cys-74, and Cys-78. An N6-acetyllysine modification is found at Lys-115. MBT repeat units lie at residues Phe-144 to Pro-248, Thr-256 to Arg-353, Phe-354 to Pro-459, and Phe-467 to Pro-563. Residues Pro-563–Pro-631 are disordered. Residues Ala-564 to Ser-576 are compositionally biased toward low complexity. Positions Lys-577–Met-593 are enriched in basic residues.

As to quaternary structure, monomer. Component of the NuA4 histone acetyltransferase complex. Interacts with EPC1; interaction is direct and promotes recruitment of MBTD1 into the NuA4 histone acetyltransferase complex.

Its subcellular location is the nucleus. The protein localises to the chromosome. Chromatin reader component of the NuA4 histone acetyltransferase complex, a multiprotein complex involved in transcriptional activation of select genes principally by acetylation of nucleosomal histones H4 and H2A. The NuA4 complex plays a direct role in repair of DNA double-strand breaks (DSBs) by promoting homologous recombination (HR). MBTD1 specifically recognizes and binds monomethylated and dimethylated 'Lys-20' on histone H4 (H4K20me1 and H4K20me2, respectively). In the NuA4 complex, MBTD1 promotes recruitment of the complex to H4K20me marks by competing with TP53BP1 for binding to H4K20me. Following recruitment to H4K20me at DNA breaks, the NuA4 complex catalyzes acetylation of 'Lys-15' on histone H2A (H2AK15), blocking the ubiquitination mark required for TP53BP1 localization at DNA breaks, thereby promoting homologous recombination (HR). The chain is MBT domain-containing protein 1 from Mus musculus (Mouse).